The sequence spans 174 residues: Thiol-disulfide oxidoreductase ResA (174 aa).

A helical; Signal-anchor for type II membrane protein membrane pass occupies residues 11–30 (TAILLVLLAAIGYTIYTNFF). Residues 36 to 174 (VAVGSTAPDF…IERHLESIKP (139 aa)) form the Thioredoxin domain. The cysteines at positions 74 and 77 are disulfide-linked.

Belongs to the thioredoxin family. ResA subfamily.

The protein localises to the cell membrane. The protein operates within protein modification; cytochrome c assembly. In terms of biological role, thiol-disulfide oxidoreductase which is required in disulfide reduction during c-type cytochrome synthesis. May accept reducing equivalents from CcdA, leading to breakage of disulfide bonds in apocytochrome c; following this reduction heme can be covalently attached. In Geobacillus kaustophilus (strain HTA426), this protein is Thiol-disulfide oxidoreductase ResA.